The sequence spans 251 residues: Aspartate/glutamate leucyltransferase (251 aa).

This sequence belongs to the R-transferase family. Bpt subfamily.

The protein localises to the cytoplasm. The catalysed reaction is N-terminal L-glutamyl-[protein] + L-leucyl-tRNA(Leu) = N-terminal L-leucyl-L-glutamyl-[protein] + tRNA(Leu) + H(+). It catalyses the reaction N-terminal L-aspartyl-[protein] + L-leucyl-tRNA(Leu) = N-terminal L-leucyl-L-aspartyl-[protein] + tRNA(Leu) + H(+). Its function is as follows. Functions in the N-end rule pathway of protein degradation where it conjugates Leu from its aminoacyl-tRNA to the N-termini of proteins containing an N-terminal aspartate or glutamate. In Xanthomonas euvesicatoria pv. vesicatoria (strain 85-10) (Xanthomonas campestris pv. vesicatoria), this protein is Aspartate/glutamate leucyltransferase.